We begin with the raw amino-acid sequence, 492 residues long: NADH-quinone oxidoreductase subunit N (492 aa).

The next 14 membrane-spanning stretches (helical) occupy residues 13–33 (MMTPEFIVLGTALILSLMDLF), 42–62 (PLAWIAFVGVAIALIATIGLI), 79–99 (FGKAFKLLLLAGGALSLLLAF), 111–131 (GEFYYLLLCALLGAMIMASSG), 133–153 (LITLFVGLELLSISSYILAGI), 168–188 (VINGGISTAITLFGMSYIFGL), 211–231 (YILAIAFLMMLVGLSFKISSV), 251–271 (FLSVVSKTAGFVIVLRLFITI), 284–304 (SLLFSMQDYIAFLAGATMIIG), 318–340 (FAYSSIAHAGYILVGFAAMSWVM), 344–366 (IWFYLLAYLFMNLGAFAILQRIS), 388–408 (AVAMGIFLLSLAGIPGTAGFI), 426–446 (VLAAVMIATTVVSYVYYFGIF), and 463–483 (PIGLAMVVVLCALGTLLFGVV).

It belongs to the complex I subunit 2 family. NDH-1 is composed of 14 different subunits. Subunits NuoA, H, J, K, L, M, N constitute the membrane sector of the complex.

The protein resides in the cell membrane. The catalysed reaction is a quinone + NADH + 5 H(+)(in) = a quinol + NAD(+) + 4 H(+)(out). In terms of biological role, NDH-1 shuttles electrons from NADH, via FMN and iron-sulfur (Fe-S) centers, to quinones in the respiratory chain. The immediate electron acceptor for the enzyme in this species is believed to be a menaquinone. Couples the redox reaction to proton translocation (for every two electrons transferred, four hydrogen ions are translocated across the cytoplasmic membrane), and thus conserves the redox energy in a proton gradient. The chain is NADH-quinone oxidoreductase subunit N from Geobacillus sp. (strain WCH70).